Consider the following 424-residue polypeptide: Adenylosuccinate synthetase 2 (424 aa).

Residues 11–17 (GDEGKGK) and 39–41 (GHT) contribute to the GTP site. Asp12 serves as the catalytic Proton acceptor. Positions 12 and 39 each coordinate Mg(2+). IMP is bound by residues 12–15 (DEGK), 37–40 (NAGH), Thr127, Arg141, Gln223, Thr238, and Arg302. The Proton donor role is filled by His40. 298–304 (TTTGRGR) is a binding site for substrate. GTP is bound by residues Arg304, 330 to 332 (KLD), and 412 to 414 (SVG).

The protein belongs to the adenylosuccinate synthetase family. In terms of assembly, homodimer. Mg(2+) is required as a cofactor.

It localises to the cytoplasm. The enzyme catalyses IMP + L-aspartate + GTP = N(6)-(1,2-dicarboxyethyl)-AMP + GDP + phosphate + 2 H(+). It functions in the pathway purine metabolism; AMP biosynthesis via de novo pathway; AMP from IMP: step 1/2. Functionally, plays an important role in the de novo pathway of purine nucleotide biosynthesis. Catalyzes the first committed step in the biosynthesis of AMP from IMP. This Methanosarcina acetivorans (strain ATCC 35395 / DSM 2834 / JCM 12185 / C2A) protein is Adenylosuccinate synthetase 2.